Here is a 311-residue protein sequence, read N- to C-terminus: MKEDVAEMEKKETKCPECGSTKLINDHERGEVVCGACGLVIDDNIVDMGPEWRAFDHEQRDKRTRVGAPITYTIHDKGLSTMIDWRNKDIYGRDIPARNRAQWYRLRKWQRKIRISGATERNLAFALSELDRDSSRLGLPRSVRESASVVYRNAVENKLIRGRSIEGVVAASLYAACRRCKVPRTLDEIADVSRVSKKEVGRTYRFLTRELHIRLPPTSPIDYVPRFASELNLSGVVQSKAIEIINQAMDNGLTSGRGPTGVAAAALYIASVLLGERKTQRDVADIAGVTEVTIRNRYKELTEQLDMGVNL.

The segment at 11–42 (KETKCPECGSTKLINDHERGEVVCGACGLVID) adopts a TFIIB-type zinc-finger fold. Zn(2+) is bound by residues C15, C18, C34, and C37. A run of 2 repeats spans residues 128–211 (SELD…TREL) and 222–303 (DYVP…ELTE).

This sequence belongs to the TFIIB family.

In terms of biological role, stabilizes TBP binding to an archaeal box-A promoter. Also responsible for recruiting RNA polymerase II to the pre-initiation complex (DNA-TBP-TFIIB). In Methanosphaera stadtmanae (strain ATCC 43021 / DSM 3091 / JCM 11832 / MCB-3), this protein is Transcription initiation factor IIB.